Reading from the N-terminus, the 278-residue chain is Sulfate transport system permease protein CysT (278 aa).

7 consecutive transmembrane segments (helical) span residues 22–42 (FTWVYLTLILFIPIIALFLKS), 67–87 (FGLSLAAAALNGVFGVIIAWV), 102–122 (FIDLPFALPTAVAGLTLATVY), 139–159 (IAFTRWGVLLAMVFISLPFVV), 188–208 (FWRVILPPILPGVLAGVAQGF), 217–237 (SVVIISGNLPFDDLIAPVLIF), and 246–266 (AGATVIGSVLLLFSLVILFVI). Residues 63–266 (YEVTFGLSLA…LFSLVILFVI (204 aa)) form the ABC transmembrane type-1 domain.

It belongs to the binding-protein-dependent transport system permease family. CysTW subfamily. In terms of assembly, the complex is composed of two ATP-binding proteins (CysA), two transmembrane proteins (CysT and CysW) and a solute-binding protein (CysP).

Its subcellular location is the cell inner membrane. Its function is as follows. Part of the ABC transporter complex CysAWTP (TC 3.A.1.6.1) involved in sulfate/thiosulfate import. Probably responsible for the translocation of the substrate across the membrane. This Synechococcus elongatus (strain ATCC 33912 / PCC 7942 / FACHB-805) (Anacystis nidulans R2) protein is Sulfate transport system permease protein CysT (cysT).